A 270-amino-acid polypeptide reads, in one-letter code: MSDQQQPPVYKIALGIEYDGSRYYGWQRQNEVRSVQEKLEKALSQVANEPITVFCAGRTDAGVHGTGQVVHFETTAQRKDAAWTLGVNANLPGDIAVRWVKAVPDDFHARFSATARRYRYIIYNHRLRPAVLSKGVTHFYEPLDAERMHRAAQCLLGENDFTSFRAVQCQSRTPWRNVMHINVTRHGPYVVVDIKANAFVHHMVRNIVGSLMEVGANNQPESWIAELLAAKDRTLAAATAKAEGLYLVAVDYPDRFDLPKPPMGPLFLAD.

Aspartate 60 functions as the Nucleophile in the catalytic mechanism. Positions phenylalanine 107–phenylalanine 111 are RNA binding. Residue tyrosine 118 participates in substrate binding. The segment at glutamine 168–arginine 172 is interaction with tRNA.

It belongs to the tRNA pseudouridine synthase TruA family. As to quaternary structure, homodimer.

The enzyme catalyses uridine(38/39/40) in tRNA = pseudouridine(38/39/40) in tRNA. Functionally, formation of pseudouridine at positions 38, 39 and 40 in the anticodon stem and loop of transfer RNAs. This is tRNA pseudouridine synthase A from Escherichia fergusonii (strain ATCC 35469 / DSM 13698 / CCUG 18766 / IAM 14443 / JCM 21226 / LMG 7866 / NBRC 102419 / NCTC 12128 / CDC 0568-73).